The primary structure comprises 934 residues: Protein translocase subunit SecA (934 aa).

ATP-binding positions include Gln87, 105-109, and Asp515; that span reads GEGKT. Residues Cys918, Cys920, Cys929, and His930 each coordinate Zn(2+).

Belongs to the SecA family. Monomer and homodimer. Part of the essential Sec protein translocation apparatus which comprises SecA, SecYEG and auxiliary proteins SecDF-YajC and YidC. Requires Zn(2+) as cofactor.

It is found in the cell inner membrane. The protein localises to the cytoplasm. The enzyme catalyses ATP + H2O + cellular proteinSide 1 = ADP + phosphate + cellular proteinSide 2.. Functionally, part of the Sec protein translocase complex. Interacts with the SecYEG preprotein conducting channel. Has a central role in coupling the hydrolysis of ATP to the transfer of proteins into and across the cell membrane, serving both as a receptor for the preprotein-SecB complex and as an ATP-driven molecular motor driving the stepwise translocation of polypeptide chains across the membrane. The chain is Protein translocase subunit SecA from Ralstonia pickettii (strain 12J).